Consider the following 87-residue polypeptide: Small ribosomal subunit protein bS20 (87 aa).

This sequence belongs to the bacterial ribosomal protein bS20 family.

In terms of biological role, binds directly to 16S ribosomal RNA. This is Small ribosomal subunit protein bS20 from Mycoplasma pneumoniae (strain ATCC 29342 / M129 / Subtype 1) (Mycoplasmoides pneumoniae).